A 145-amino-acid chain; its full sequence is D-aminoacyl-tRNA deacylase (145 aa).

The Gly-cisPro motif, important for rejection of L-amino acids signature appears at 137–138 (GP).

It belongs to the DTD family. As to quaternary structure, homodimer.

It localises to the cytoplasm. The catalysed reaction is glycyl-tRNA(Ala) + H2O = tRNA(Ala) + glycine + H(+). It carries out the reaction a D-aminoacyl-tRNA + H2O = a tRNA + a D-alpha-amino acid + H(+). Its function is as follows. An aminoacyl-tRNA editing enzyme that deacylates mischarged D-aminoacyl-tRNAs. Also deacylates mischarged glycyl-tRNA(Ala), protecting cells against glycine mischarging by AlaRS. Acts via tRNA-based rather than protein-based catalysis; rejects L-amino acids rather than detecting D-amino acids in the active site. By recycling D-aminoacyl-tRNA to D-amino acids and free tRNA molecules, this enzyme counteracts the toxicity associated with the formation of D-aminoacyl-tRNA entities in vivo and helps enforce protein L-homochirality. This is D-aminoacyl-tRNA deacylase from Pseudomonas fluorescens (strain SBW25).